The chain runs to 492 residues: Cobyric acid synthase (492 aa).

The GATase cobBQ-type domain occupies 252-440; that stretch reads QLNVVVPVLT…LHGIFEQTEA (189 aa). Cysteine 333 functions as the Nucleophile in the catalytic mechanism. The active site involves histidine 432.

It belongs to the CobB/CobQ family. CobQ subfamily.

It participates in cofactor biosynthesis; adenosylcobalamin biosynthesis. In terms of biological role, catalyzes amidations at positions B, D, E, and G on adenosylcobyrinic A,C-diamide. NH(2) groups are provided by glutamine, and one molecule of ATP is hydrogenolyzed for each amidation. The sequence is that of Cobyric acid synthase from Photobacterium profundum (strain SS9).